We begin with the raw amino-acid sequence, 182 residues long: Large ribosomal subunit protein uL6 (182 aa).

The protein belongs to the universal ribosomal protein uL6 family. In terms of assembly, part of the 50S ribosomal subunit.

Its function is as follows. This protein binds to the 23S rRNA, and is important in its secondary structure. It is located near the subunit interface in the base of the L7/L12 stalk, and near the tRNA binding site of the peptidyltransferase center. This Methanocaldococcus jannaschii (strain ATCC 43067 / DSM 2661 / JAL-1 / JCM 10045 / NBRC 100440) (Methanococcus jannaschii) protein is Large ribosomal subunit protein uL6.